Here is a 449-residue protein sequence, read N- to C-terminus: DNA-directed RNA polymerase subunit Rpo1C (449 aa).

Residues 1 to 68 are unknown; sequence MQDVIKKIED…EGEELLKAVE (68 aa). The tract at residues 69-449 is DNA-directed RNA polymerase subunit Rpo1C; it reads DEYLRILKVR…TGSVSVIMKK (381 aa).

The protein belongs to the RNA polymerase beta' chain family. Part of the RNA polymerase complex.

It localises to the cytoplasm. It catalyses the reaction RNA(n) + a ribonucleoside 5'-triphosphate = RNA(n+1) + diphosphate. In terms of biological role, DNA-dependent RNA polymerase (RNAP) catalyzes the transcription of DNA into RNA using the four ribonucleoside triphosphates as substrates. Forms part of the jaw domain. The polypeptide is DNA-directed RNA polymerase subunit Rpo1C (Methanothermobacter thermautotrophicus (strain Winter) (Methanobacterium thermoautotrophicum)).